A 172-amino-acid polypeptide reads, in one-letter code: Large ribosomal subunit protein uL10 (172 aa).

Belongs to the universal ribosomal protein uL10 family. In terms of assembly, part of the ribosomal stalk of the 50S ribosomal subunit. The N-terminus interacts with L11 and the large rRNA to form the base of the stalk. The C-terminus forms an elongated spine to which L12 dimers bind in a sequential fashion forming a multimeric L10(L12)X complex.

Forms part of the ribosomal stalk, playing a central role in the interaction of the ribosome with GTP-bound translation factors. This chain is Large ribosomal subunit protein uL10, found in Rhizobium johnstonii (strain DSM 114642 / LMG 32736 / 3841) (Rhizobium leguminosarum bv. viciae).